The sequence spans 325 residues: 4-diphosphocytidyl-2-C-methyl-D-erythritol kinase (325 aa).

The active site involves lysine 22. ATP is bound at residue 110-120 (PVAGGMAGGSA). Aspartate 152 is a catalytic residue. The tract at residues 306 to 325 (PAPGARVLEAVSTPSPGGRS) is disordered.

Belongs to the GHMP kinase family. IspE subfamily.

It catalyses the reaction 4-CDP-2-C-methyl-D-erythritol + ATP = 4-CDP-2-C-methyl-D-erythritol 2-phosphate + ADP + H(+). The protein operates within isoprenoid biosynthesis; isopentenyl diphosphate biosynthesis via DXP pathway; isopentenyl diphosphate from 1-deoxy-D-xylulose 5-phosphate: step 3/6. Functionally, catalyzes the phosphorylation of the position 2 hydroxy group of 4-diphosphocytidyl-2C-methyl-D-erythritol. The protein is 4-diphosphocytidyl-2-C-methyl-D-erythritol kinase of Kineococcus radiotolerans (strain ATCC BAA-149 / DSM 14245 / SRS30216).